We begin with the raw amino-acid sequence, 104 residues long: Secretoglobin family 3A member 1 (104 aa).

A signal peptide spans 1–21; sequence MKLTTTFLVLCVALLSDSGVA.

This sequence belongs to the secretoglobin family. UGRP subfamily. In terms of assembly, homodimer; disulfide-linked. As to expression, highly expressed in lung, where it localizes to epithelial cells lining the trachea and bronchi. Expression in lung is mainly restricted to bronchi, submucosal glands of the trachea, and tracheal epithelium, with little expression in terminal bronchioles. Expressed in uterus where it localizes to epithelial cells of the uterine glands. Also detected in heart, stomach and small intestine.

It is found in the secreted. Secreted cytokine-like protein. Inhibits cell growth in vitro. This Mus musculus (Mouse) protein is Secretoglobin family 3A member 1 (Scgb3a1).